Reading from the N-terminus, the 557-residue chain is Elongator complex protein 3 (557 aa).

Residues R91–P381 enclose the Radical SAM core domain. C108, C118, and C121 together coordinate [4Fe-4S] cluster. Residue K173 coordinates acetyl-CoA. Residues T405–I557 form the N-acetyltransferase domain. Residue K453 forms a Glycyl lysine isopeptide (Lys-Gly) (interchain with G-Cter in ubiquitin) linkage. Acetyl-CoA-binding positions include E485 to V488, F508 to T510, and Y541.

It belongs to the ELP3 family. Component of the elongator complex which consists of ELP1/IKI3, ELP2, ELP3, ELP4, ELP5/IKI1 and ELP6. The elongator complex is composed of two copies of the Elp123 subcomplex (composed of ELP1/IKI3, ELP2 and ELP3) and two copies of the Elp456 subcomplex (composed of ELP4, ELP5/IKI1 and ELP6). The Elp123 subcomplex forms a two-lobed scaffold, which binds the Elp456 subcomplex asymmetrically. In each lobe, ELP2 is tightly sandwiched between ELP1/IKI3 and ELP3. The Elp123 subcomplex binds tRNA through ELP1/IKI3 and ELP3 and can bind 2 tRNAs simultaneously. tRNA-binding induces conformational rearrangements which precisely position the targeted anticodon base in the active site. ELP3 interacts with KTI11/DPH3. ELP3 interacts with KTI12. The Elp456 subcomplex binds tRNA and has ATPase activity. Requires [4Fe-4S] cluster as cofactor.

It localises to the cytoplasm. The protein localises to the nucleus. It catalyses the reaction uridine(34) in tRNA + acetyl-CoA + S-adenosyl-L-methionine + H2O = 5-(carboxymethyl)uridine(34) in tRNA + 5'-deoxyadenosine + L-methionine + CoA + 2 H(+). It participates in tRNA modification; 5-methoxycarbonylmethyl-2-thiouridine-tRNA biosynthesis. Its function is as follows. Catalytic tRNA acetyltransferase subunit of the elongator complex which is required for multiple tRNA modifications, including mcm5U (5-methoxycarbonylmethyl uridine), mcm5s2U (5-methoxycarbonylmethyl-2-thiouridine), and ncm5U (5-carbamoylmethyl uridine). In the elongator complex, acts as a tRNA uridine(34) acetyltransferase, which mediates formation of carboxymethyluridine in the wobble base at position 34 in tRNAs. The complex functions as a gamma-toxin target (TOT); disruption of the complex confers resistance to Kluyveromyces lactis toxin zymocin (pGKL1 killer toxin). May also be involved in sensitivity to Pichia inositovora toxin. Independently, ELP3 may be involved in polarized exocytosis. This is Elongator complex protein 3 from Saccharomyces cerevisiae (strain ATCC 204508 / S288c) (Baker's yeast).